A 212-amino-acid chain; its full sequence is Hydroxyacylglutathione hydrolase GloC (212 aa).

Zn(2+) is bound by residues His-55, His-57, Asp-59, His-60, His-132, Asp-151, and His-192.

The protein belongs to the metallo-beta-lactamase superfamily. Glyoxalase II family. Zn(2+) serves as cofactor.

It carries out the reaction an S-(2-hydroxyacyl)glutathione + H2O = a 2-hydroxy carboxylate + glutathione + H(+). The enzyme catalyses (R)-S-lactoylglutathione + H2O = (R)-lactate + glutathione + H(+). Its pathway is secondary metabolite metabolism; methylglyoxal degradation; (R)-lactate from methylglyoxal: step 2/2. Type II glyoxalase, isozyme of GloB, that hydrolyzes (R)-S-lactoylglutathione to (R)-lactate and glutathione. Plays a role in methylglyoxal (MG) detoxification. The sequence is that of Hydroxyacylglutathione hydrolase GloC from Haemophilus influenzae (strain ATCC 51907 / DSM 11121 / KW20 / Rd).